The chain runs to 198 residues: Probable host range protein 2-3 (198 aa).

The disordered stretch occupies residues 153–198 (GENGYEDSTEEEDNEEDTDGVCLYCLEEEEEEDEDEDEDEDEDEEE). Composition is skewed to acidic residues over residues 156 to 171 (GYED…EDTD) and 178 to 198 (LEEE…DEEE).

Belongs to the poxviridae C7 protein family.

Plays a role for multiplication of the virus in different cell types. The chain is Probable host range protein 2-3 from Rabbit fibroma virus (strain Kasza) (RFV).